Here is a 264-residue protein sequence, read N- to C-terminus: MFNLSDFSELPRWIGAEFLGTFFLILSGNGAGSQLTLNKMFAKESKAKLLTAAFAWGIAVLVGVLIANSLFEGAGNINPAVSLFYAVSGTIQKALYPLHVNFSIPLLWVALLLAWVAQFAGAMLAQALLNFLFWKHIEQTDPQSVLVTHCTNPAIFNIPRNFATEFVATSVLIASLLVAGSFGANRFDQSPRGVVPMLVVTGLIMSFGAATGTAINPARDLGPRIVYWLSPIKNKDPNLKYSWIPVAAPLSASVILGVLVAVIV.

The next 2 helical transmembrane spans lie at Trp13–Ser33 and Thr51–Phe71. Positions Asn78–Ala80 match the NPA 1 motif. Transmembrane regions (helical) follow at residues Ile104 to Leu124, Phe162 to Phe182, and Val195 to Ile215. An NPA 2 motif is present at residues Asn216–Ala218. Residues Ile244–Val264 traverse the membrane as a helical segment.

This sequence belongs to the MIP/aquaporin (TC 1.A.8) family.

Its subcellular location is the cell membrane. The enzyme catalyses glycerol(in) = glycerol(out). Mediates glycerol diffusion across the cytoplasmic membrane via a pore-type mechanism. The protein is Probable glycerol uptake facilitator protein (glpF) of Mycoplasma pneumoniae (strain ATCC 29342 / M129 / Subtype 1) (Mycoplasmoides pneumoniae).